The sequence spans 149 residues: Small ribosomal subunit protein uS11z (149 aa).

Residues 130-149 (VTPVPTDSTRRKGGRRGRRL) form a disordered region. Basic residues predominate over residues 140–149 (RKGGRRGRRL).

It belongs to the universal ribosomal protein uS11 family.

The sequence is that of Small ribosomal subunit protein uS11z from Zea mays (Maize).